A 431-amino-acid polypeptide reads, in one-letter code: Adenylosuccinate synthetase (431 aa).

Residues 13–19 and 41–43 contribute to the GTP site; these read GDEGKGK and GHT. Aspartate 14 acts as the Proton acceptor in catalysis. The Mg(2+) site is built by aspartate 14 and glycine 41. IMP-binding positions include 14 to 17, 39 to 42, threonine 130, arginine 144, glutamine 225, threonine 240, and arginine 304; these read DEGK and NAGH. Histidine 42 functions as the Proton donor in the catalytic mechanism. 300–306 contributes to the substrate binding site; it reads ATTGRKR. Residues arginine 306, 332-334, and 415-417 each bind GTP; these read KLD and STG.

This sequence belongs to the adenylosuccinate synthetase family. In terms of assembly, homodimer. It depends on Mg(2+) as a cofactor.

Its subcellular location is the cytoplasm. The catalysed reaction is IMP + L-aspartate + GTP = N(6)-(1,2-dicarboxyethyl)-AMP + GDP + phosphate + 2 H(+). It functions in the pathway purine metabolism; AMP biosynthesis via de novo pathway; AMP from IMP: step 1/2. Functionally, plays an important role in the de novo pathway of purine nucleotide biosynthesis. Catalyzes the first committed step in the biosynthesis of AMP from IMP. In Shewanella loihica (strain ATCC BAA-1088 / PV-4), this protein is Adenylosuccinate synthetase.